We begin with the raw amino-acid sequence, 430 residues long: Terminal nucleotidyltransferase 5B (430 aa).

The tract at residues 1–46 (MMPSESETESRDRAAAQVGTAAAAAVAKAAPAGGGPDPEASSASLG) is disordered. Residues 15–44 (AAQVGTAAAAAVAKAAPAGGGPDPEASSAS) are compositionally biased toward low complexity.

The protein belongs to the TENT family.

It localises to the cytoplasm. Its subcellular location is the nucleus. The enzyme catalyses RNA(n) + ATP = RNA(n)-3'-adenine ribonucleotide + diphosphate. Catalyzes the transfer of one adenosine molecule from an ATP to an mRNA poly(A) tail bearing a 3'-OH terminal group in an ATP hydrolysis-dependent manner. May be involved in maintaining the translation efficiency of at least some genes through preventing degradation of their mRNAs. Prefers RNA molecules that are adenosine-rich close to 3'-end. In addition, may inhibit cell proliferation and cell cycle progression through ubiquitination of beta-catenin/CTNNB1. The polypeptide is Terminal nucleotidyltransferase 5B (Bos taurus (Bovine)).